Here is a 349-residue protein sequence, read N- to C-terminus: MSKIKIALLFGGISGEHIISVRSSAFIFATIDREKYDVCPVYINPNGKFWIPTVSEPIYPDPSGKTEIEFLQEFNKANAIVSPSEPADISQMGFLSAFLGLHGGAGEDGRIQGFLDTLGIPHTGSGVLASSLAMDKYRANILFEAMGIPVAPFLELEKGKTDPRKTLLNLSFSYPVFIKPTLGGSSVNTGMAKTAEEAMTLVDKIFVTDDRVLVQKLVSGTEVSIGVLEKPEGKKRNPFPLVPTEIRPKSEFFDFEAKYTKGASEEITPAPVGDEVTKTLQEYTLRCHEILGCKGYSRTDFIISDGVPYVLETNTLPGMTGTSLIPQQAKALGINMKDVFTWLLEISLS.

Positions 140–345 (NILFEAMGIP…MKDVFTWLLE (206 aa)) constitute an ATP-grasp domain. 169-224 (NLSFSYPVFIKPTLGGSSVNTGMAKTAEEAMTLVDKIFVTDDRVLVQKLVSGTEVS) contacts ATP. Mg(2+) contacts are provided by D300, E312, and N314.

It belongs to the D-alanine--D-alanine ligase family. It depends on Mg(2+) as a cofactor. Requires Mn(2+) as cofactor.

The protein localises to the cytoplasm. The catalysed reaction is 2 D-alanine + ATP = D-alanyl-D-alanine + ADP + phosphate + H(+). Its pathway is cell wall biogenesis; peptidoglycan biosynthesis. Cell wall formation. The polypeptide is D-alanine--D-alanine ligase (Leptospira biflexa serovar Patoc (strain Patoc 1 / Ames)).